Here is a 280-residue protein sequence, read N- to C-terminus: 3-deoxy-manno-octulosonate cytidylyltransferase (280 aa).

It belongs to the KdsB family.

Its subcellular location is the cytoplasm. The enzyme catalyses 3-deoxy-alpha-D-manno-oct-2-ulosonate + CTP = CMP-3-deoxy-beta-D-manno-octulosonate + diphosphate. It participates in nucleotide-sugar biosynthesis; CMP-3-deoxy-D-manno-octulosonate biosynthesis; CMP-3-deoxy-D-manno-octulosonate from 3-deoxy-D-manno-octulosonate and CTP: step 1/1. The protein operates within bacterial outer membrane biogenesis; lipopolysaccharide biosynthesis. Its function is as follows. Activates KDO (a required 8-carbon sugar) for incorporation into bacterial lipopolysaccharide in Gram-negative bacteria. In Colwellia psychrerythraea (strain 34H / ATCC BAA-681) (Vibrio psychroerythus), this protein is 3-deoxy-manno-octulosonate cytidylyltransferase.